A 718-amino-acid polypeptide reads, in one-letter code: Polyribonucleotide nucleotidyltransferase (718 aa).

Mg(2+)-binding residues include D493 and D499. The 60-residue stretch at 560–619 (PRVIKKQIDPDKIRNVIGPGGKMINKIIDETGVKIDIEPDGLIYISSSDAEQAEQAIKAI) folds into the KH domain. Positions 629–697 (GEVYLGKVVR…ERGRINLSRK (69 aa)) constitute an S1 motif domain. Residues 695-718 (SRKQALGEEDGKTNNDDKKSTKKT) are disordered. Positions 699-718 (ALGEEDGKTNNDDKKSTKKT) are enriched in basic and acidic residues.

Belongs to the polyribonucleotide nucleotidyltransferase family. Mg(2+) serves as cofactor.

It localises to the cytoplasm. The catalysed reaction is RNA(n+1) + phosphate = RNA(n) + a ribonucleoside 5'-diphosphate. Functionally, involved in mRNA degradation. Catalyzes the phosphorolysis of single-stranded polyribonucleotides processively in the 3'- to 5'-direction. This Natranaerobius thermophilus (strain ATCC BAA-1301 / DSM 18059 / JW/NM-WN-LF) protein is Polyribonucleotide nucleotidyltransferase.